Consider the following 435-residue polypeptide: MTKCSFFRAILVAVGLMTAAVFATPANALVTLDIRKGNVQPMPIAVTDFQGDIGAQVSQVIAADLQRSGLFAPINKTAFIEKISNPDAAPRFEDWKVINAQALVTGRVSKEADGRLRAEFRLWDPFAGQQMTGQQFYTQPENWRRVAHIIADAIYKQITGEEGYFDTRVVFVSESGTKQQRKRQLAIMDQDGFNVRMLTDGSDLVLTPRFSPSRQEVTYMSFANQQPRVYLLQLETGQREVVGNFPGMTFSPRFSPDGQKVIMSLQQDANSNIYTMDLRSRTTTRLTSTAAIDTSPSYSPDGARVSFESDRGGKPQIYVMNADGSGQTRISFGDGSYSTPVWSPRGDLIAFTKQAGGKFSIGVMKPDGSGERILTTGFHNEGPTWAPNGRVLMFFRQAAGSGGPQLYSIDLTGYNEQLVKTPTYGSDPAWSPLME.

An N-terminal signal peptide occupies residues 1-28 (MTKCSFFRAILVAVGLMTAAVFATPANA). The segment at 288-310 (STAAIDTSPSYSPDGARVSFESD) is disordered.

Belongs to the TolB family. As to quaternary structure, the Tol-Pal system is composed of five core proteins: the inner membrane proteins TolA, TolQ and TolR, the periplasmic protein TolB and the outer membrane protein Pal. They form a network linking the inner and outer membranes and the peptidoglycan layer.

It is found in the periplasm. Part of the Tol-Pal system, which plays a role in outer membrane invagination during cell division and is important for maintaining outer membrane integrity. The sequence is that of Tol-Pal system protein TolB from Rhizobium johnstonii (strain DSM 114642 / LMG 32736 / 3841) (Rhizobium leguminosarum bv. viciae).